The chain runs to 689 residues: Glycine--tRNA ligase beta subunit (689 aa).

The protein belongs to the class-II aminoacyl-tRNA synthetase family. As to quaternary structure, tetramer of two alpha and two beta subunits.

It is found in the cytoplasm. It carries out the reaction tRNA(Gly) + glycine + ATP = glycyl-tRNA(Gly) + AMP + diphosphate. In Actinobacillus succinogenes (strain ATCC 55618 / DSM 22257 / CCUG 43843 / 130Z), this protein is Glycine--tRNA ligase beta subunit.